Reading from the N-terminus, the 440-residue chain is MQQIARSVALAFNNLPRPHRVMLGSLTVLTLAVAVWRPYVYHRDATPIVKTIELEQNEIRSLLPEASEPIDQAAQEDEAIPQDELDDKIAGEAGVHEYVVSTGDTLSSILNQYGIDMGDITQLAAADKELRNLKIGQQLSWTLTADGELQRLTWEVSRRETRTYDRTAANGFKMTSEMQQGEWVNNLLKGTVGGSFVASARNAGLTSAEVSAVIKAMQWQMDFRKLKKGDEFAVLMSREMLDGKREQSQLLGVRLRSEGKDYYAIRAEDGKFYDRNGTGLAKGFLRFPTAKQFRISSNFNPRRTNPVTGRVAPHRGVDFAMPQGTPVLSVGDGEVVVAKRSGAAGYYVAIRHGRSYTTRYMHLRKILVKPGQKVKRGDRIALSGNTGRSTGPHLHYEVWINQQAVNPLTAKLPRTEGLTGSDRREFLAQAKEIVPQLRFD.

A helical transmembrane segment spans residues Val21 to Val40. A LysM domain is found at His96–Trp141. His314 contacts Zn(2+).

The protein belongs to the peptidase M23B family. Zn(2+) is required as a cofactor.

The protein localises to the cell membrane. It participates in cell wall biogenesis; cell wall polysaccharide biosynthesis. In terms of biological role, a murein DD-endopeptidase with specificity for D-Ala-meso-diaminopimelic acid (mDAP) cross-links. Its role is probably to cleave D-Ala-mDAP cross-links to allow insertion of new glycans and thus cell wall expansion. Functionally redundant with MepM and MepH. The sequence is that of Murein DD-endopeptidase MepM (mepM) from Escherichia coli O6:H1 (strain CFT073 / ATCC 700928 / UPEC).